Consider the following 252-residue polypeptide: ATP synthase subunit a (252 aa).

5 helical membrane passes run 33 to 53, 92 to 112, 130 to 150, 196 to 216, and 217 to 237; these read GQVF…ALAA, VPFV…GALV, DINT…YAGL, LVVG…VMAL, and GLFT…TYIG.

The protein belongs to the ATPase A chain family. F-type ATPases have 2 components, CF(1) - the catalytic core - and CF(0) - the membrane proton channel. CF(1) has five subunits: alpha(3), beta(3), gamma(1), delta(1), epsilon(1). CF(0) has three main subunits: a(1), b(2) and c(9-12). The alpha and beta chains form an alternating ring which encloses part of the gamma chain. CF(1) is attached to CF(0) by a central stalk formed by the gamma and epsilon chains, while a peripheral stalk is formed by the delta and b chains.

Its subcellular location is the cellular thylakoid membrane. Functionally, key component of the proton channel; it plays a direct role in the translocation of protons across the membrane. This Synechococcus sp. (strain PCC 6716) protein is ATP synthase subunit a.